The primary structure comprises 363 residues: Protein-arginine kinase (363 aa).

Residues Ile-24–Ala-254 enclose the Phosphagen kinase C-terminal domain. ATP-binding positions include Ser-27 to Arg-31, His-92, Arg-125, Arg-176 to Met-180, and Arg-207 to Glu-212. Residues Arg-337–Ala-342 carry the RDXXRA motif of the pArg binding pocket involved in allosteric regulation motif.

It belongs to the ATP:guanido phosphotransferase family.

It carries out the reaction L-arginyl-[protein] + ATP = N(omega)-phospho-L-arginyl-[protein] + ADP + H(+). Appears to be allosterically activated by the binding of pArg-containing polypeptides to the pArg-binding pocket localized in the C-terminal domain of McsB. Its function is as follows. Catalyzes the specific phosphorylation of arginine residues in a large number of proteins. Is part of the bacterial stress response system. Protein arginine phosphorylation has a physiologically important role and is involved in the regulation of many critical cellular processes, such as protein homeostasis, motility, competence, and stringent and stress responses, by regulating gene expression and protein activity. The sequence is that of Protein-arginine kinase from Bacillus licheniformis (strain ATCC 14580 / DSM 13 / JCM 2505 / CCUG 7422 / NBRC 12200 / NCIMB 9375 / NCTC 10341 / NRRL NRS-1264 / Gibson 46).